A 415-amino-acid polypeptide reads, in one-letter code: Serine/threonine transporter SstT (415 aa).

The next 8 helical transmembrane spans lie at 23 to 43 (ILIG…AAIA), 47 to 67 (LGTL…LMLV), 85 to 105 (ILFL…LFSF), 144 to 164 (ALLN…GFAL), 181 to 201 (AVTF…FGLV), 220 to 240 (LLVL…LLVF), 293 to 313 (IPLG…VLTL), and 333 to 353 (VVAS…LLLI).

The protein belongs to the dicarboxylate/amino acid:cation symporter (DAACS) (TC 2.A.23) family.

Its subcellular location is the cell inner membrane. It catalyses the reaction L-serine(in) + Na(+)(in) = L-serine(out) + Na(+)(out). It carries out the reaction L-threonine(in) + Na(+)(in) = L-threonine(out) + Na(+)(out). In terms of biological role, involved in the import of serine and threonine into the cell, with the concomitant import of sodium (symport system). This chain is Serine/threonine transporter SstT, found in Klebsiella pneumoniae subsp. pneumoniae (strain ATCC 700721 / MGH 78578).